A 586-amino-acid chain; its full sequence is Tetratricopeptide repeat protein 39B (586 aa).

3 TPR repeats span residues 292–325, 483–516, and 524–557; these read SIILFYAARIDILKGRFEQAQETFQKCIVSQQEW, CLVQLLKGVCLKHLGRLLQAELCFNQVIQSEKRV, and PFTFYELGLLYKEQGDRDKAIRYIETAKGNYKDY.

It belongs to the TTC39 family.

Functionally, may be involved in lipid metabolism. In Xenopus laevis (African clawed frog), this protein is Tetratricopeptide repeat protein 39B (ttc39b).